Consider the following 571-residue polypeptide: MRTSKYLLSTLKETPNDAEVVSHQLMLRAGMIRRLASGLYTWLPTGLRVLRKVENIVRQEIDNAGAIETLMPVVQPFELWEETGRSEEMGPELLRFTDRHARPFVLSPTAEEVITSLVRNEVNSYKQLPLNLYQIQTKFRDERRPRFGVMRAREFCMMDAYSFDIDKEGLQKSYDAMHDAYCRAFDRMGLEYRPVLADSGAIGGSGSQEFHVLAESGEDLIAFSTESDYAANIEKAEALAPTTERAAPTQEMTTVDTPNAKTIAELVEQHGIAIEKTVKTLFVKASDEVDADIIALIIRGDHELNEVKAENLPHVLSPLEMADEAQLRDLIGAGAGSLGPVGLELPFIVDRSVAVMSDFSTGANIDGKHFFGVNWDRDVQLGQIEDLRSVVEGDLSPCGQGTLQLKRGIEVGHIFQLGTAYSEAMNCGVLDANGKNSILEMGCYGIGVSRVVASAIEQNNDEYGIVWPEALAPFTVAIVPMNMYKSDRVKEAAEKLYAELTAMGIDVLFDDRKERPGVMFKDIELIGIPHTVVIGDRSMDEGNFEYKNRRANSKEVIEIANIVEHIKAQLS.

This sequence belongs to the class-II aminoacyl-tRNA synthetase family. ProS type 1 subfamily. In terms of assembly, homodimer.

The protein localises to the cytoplasm. The enzyme catalyses tRNA(Pro) + L-proline + ATP = L-prolyl-tRNA(Pro) + AMP + diphosphate. Its function is as follows. Catalyzes the attachment of proline to tRNA(Pro) in a two-step reaction: proline is first activated by ATP to form Pro-AMP and then transferred to the acceptor end of tRNA(Pro). As ProRS can inadvertently accommodate and process non-cognate amino acids such as alanine and cysteine, to avoid such errors it has two additional distinct editing activities against alanine. One activity is designated as 'pretransfer' editing and involves the tRNA(Pro)-independent hydrolysis of activated Ala-AMP. The other activity is designated 'posttransfer' editing and involves deacylation of mischarged Ala-tRNA(Pro). The misacylated Cys-tRNA(Pro) is not edited by ProRS. The polypeptide is Proline--tRNA ligase (Aliivibrio salmonicida (strain LFI1238) (Vibrio salmonicida (strain LFI1238))).